The primary structure comprises 408 residues: Arginine biosynthesis bifunctional protein ArgJ (408 aa).

6 residues coordinate substrate: Thr158, Lys184, Thr195, Glu281, Asn403, and Thr408. The Nucleophile role is filled by Thr195.

It belongs to the ArgJ family. In terms of assembly, heterotetramer of two alpha and two beta chains.

The protein localises to the cytoplasm. The catalysed reaction is N(2)-acetyl-L-ornithine + L-glutamate = N-acetyl-L-glutamate + L-ornithine. It carries out the reaction L-glutamate + acetyl-CoA = N-acetyl-L-glutamate + CoA + H(+). Its pathway is amino-acid biosynthesis; L-arginine biosynthesis; L-ornithine and N-acetyl-L-glutamate from L-glutamate and N(2)-acetyl-L-ornithine (cyclic): step 1/1. It participates in amino-acid biosynthesis; L-arginine biosynthesis; N(2)-acetyl-L-ornithine from L-glutamate: step 1/4. In terms of biological role, catalyzes two activities which are involved in the cyclic version of arginine biosynthesis: the synthesis of N-acetylglutamate from glutamate and acetyl-CoA as the acetyl donor, and of ornithine by transacetylation between N(2)-acetylornithine and glutamate. This chain is Arginine biosynthesis bifunctional protein ArgJ, found in Bacillus cereus (strain ZK / E33L).